Reading from the N-terminus, the 202-residue chain is Small ribosomal subunit protein uS2 (202 aa).

This sequence belongs to the universal ribosomal protein uS2 family.

The polypeptide is Small ribosomal subunit protein uS2 (rps2) (Pyrococcus abyssi (strain GE5 / Orsay)).